A 217-amino-acid chain; its full sequence is 3,4-dihydroxy-2-butanone 4-phosphate synthase (217 aa).

Residues 37–38 (RE), Asp-42, 150–154 (RRGHT), and Glu-174 contribute to the D-ribulose 5-phosphate site. Glu-38 contacts Mg(2+). Residue His-153 coordinates Mg(2+).

Belongs to the DHBP synthase family. In terms of assembly, homodimer. Mg(2+) is required as a cofactor. Mn(2+) serves as cofactor.

The catalysed reaction is D-ribulose 5-phosphate = (2S)-2-hydroxy-3-oxobutyl phosphate + formate + H(+). The protein operates within cofactor biosynthesis; riboflavin biosynthesis; 2-hydroxy-3-oxobutyl phosphate from D-ribulose 5-phosphate: step 1/1. In terms of biological role, catalyzes the conversion of D-ribulose 5-phosphate to formate and 3,4-dihydroxy-2-butanone 4-phosphate. The protein is 3,4-dihydroxy-2-butanone 4-phosphate synthase of Shewanella sediminis (strain HAW-EB3).